The primary structure comprises 273 residues: Undecaprenyl-diphosphatase (273 aa).

Transmembrane regions (helical) follow at residues G13–N35, V45–Y62, F82–K102, L108–V128, T186–L206, L219–L239, and F250–I270.

This sequence belongs to the UppP family.

The protein localises to the cell inner membrane. It catalyses the reaction di-trans,octa-cis-undecaprenyl diphosphate + H2O = di-trans,octa-cis-undecaprenyl phosphate + phosphate + H(+). Its function is as follows. Catalyzes the dephosphorylation of undecaprenyl diphosphate (UPP). Confers resistance to bacitracin. This chain is Undecaprenyl-diphosphatase, found in Neisseria gonorrhoeae (strain NCCP11945).